Here is a 447-residue protein sequence, read N- to C-terminus: Methionine aminopeptidase 2 (447 aa).

Residues M1–I86 are disordered. Basic and acidic residues predominate over residues E8–E32. Residues G43 to T60 show a composition bias toward acidic residues. A compositionally biased stretch (basic residues) spans K71–I86. H198 lines the substrate pocket. Residues D218, D229, and H300 each contribute to the a divalent metal cation site. Substrate is bound at residue H308. E333 and E428 together coordinate a divalent metal cation.

It belongs to the peptidase M24A family. Methionine aminopeptidase eukaryotic type 2 subfamily. It depends on Co(2+) as a cofactor. The cofactor is Zn(2+). Requires Mn(2+) as cofactor. Fe(2+) is required as a cofactor.

The protein localises to the cytoplasm. The enzyme catalyses Release of N-terminal amino acids, preferentially methionine, from peptides and arylamides.. Cotranslationally removes the N-terminal methionine from nascent proteins. The N-terminal methionine is often cleaved when the second residue in the primary sequence is small and uncharged (Met-Ala-, Cys, Gly, Pro, Ser, Thr, or Val). The polypeptide is Methionine aminopeptidase 2 (Candida albicans (strain WO-1) (Yeast)).